The chain runs to 1481 residues: RNA helicase aquarius (1481 aa).

The tract at residues 1–416 (MAAPAQPKKI…LVSRHERRIS (416 aa)) is helical region with structural similarity to ARM repeat domains. The interval 417 to 1481 (QIQQLNQMPL…DAESVPTETE (1065 aa)) is required for assembly of the IB complex. Residues 754–773 (RSGKGKKRKDADGEEDDTEE) are disordered. ATP-binding positions include glutamine 801, glutamine 806, and 826–831 (GTGKTD). An N6-acetyllysine modification is found at lysine 1055. The segment covering 1396 to 1414 (EEGEEGQSQETEMEAEEET) has biased composition (acidic residues). The tract at residues 1396–1481 (EEGEEGQSQE…DAESVPTETE (86 aa)) is disordered. The segment covering 1418–1448 (QGNLTPSPADASLSQETPAAQPDCSSQTEDT) has biased composition (polar residues). Positions 1455–1468 (ATAAEPVSAAAEAA) are enriched in low complexity.

The protein belongs to the CWF11 family. In terms of assembly, identified in the spliceosome C complex. Component of the XAB2 complex, a multimeric protein complex composed of XAB2, PRPF19, AQR, ZNF830, ISY1, and PPIE. Identified in a pentameric intron-binding (IB) complex composed of AQR, XAB2, ISY1, ZNF830 and PPIE that is incorporated into the spliceosome as a preassembled complex. The IB complex does not contain PRPF19. Within the spliceosome, interacts with SNRPA1, SF3B1, SF3B3, SF3A1 and SF3A2.

The protein localises to the nucleus. It is found in the nucleoplasm. It carries out the reaction ATP + H2O = ADP + phosphate + H(+). Involved in pre-mRNA splicing as component of the spliceosome. Intron-binding spliceosomal protein required to link pre-mRNA splicing and snoRNP (small nucleolar ribonucleoprotein) biogenesis. Plays a key role in position-dependent assembly of intron-encoded box C/D small snoRNP, splicing being required for snoRNP assembly. May act by helping the folding of the snoRNA sequence. Binds to intron of pre-mRNAs in a sequence-independent manner, contacting the region between snoRNA and the branchpoint of introns (40 nucleotides upstream of the branchpoint) during the late stages of splicing. Has ATP-dependent RNA helicase activity and can unwind double-stranded RNA molecules with a 3' overhang (in vitro). This is RNA helicase aquarius (Aqr) from Mus musculus (Mouse).